Reading from the N-terminus, the 104-residue chain is L-rhamnose mutarotase (104 aa).

Tyr-18 serves as a coordination point for substrate. The Proton donor role is filled by His-22. Substrate contacts are provided by residues Tyr-41 and 76 to 77 (WW).

This sequence belongs to the rhamnose mutarotase family. As to quaternary structure, homodimer.

The protein localises to the cytoplasm. The catalysed reaction is alpha-L-rhamnose = beta-L-rhamnose. Its pathway is carbohydrate metabolism; L-rhamnose metabolism. Its function is as follows. Involved in the anomeric conversion of L-rhamnose. This Acidiphilium cryptum (strain JF-5) protein is L-rhamnose mutarotase.